A 438-amino-acid polypeptide reads, in one-letter code: 3-phosphoshikimate 1-carboxyvinyltransferase (438 aa).

3-phosphoshikimate is bound by residues lysine 23, serine 24, and arginine 28. Lysine 23 contacts phosphoenolpyruvate. Phosphoenolpyruvate contacts are provided by glycine 94 and arginine 122. The 3-phosphoshikimate site is built by serine 167, glutamine 169, aspartate 321, and lysine 348. Residue glutamine 169 coordinates phosphoenolpyruvate. Catalysis depends on aspartate 321, which acts as the Proton acceptor. Residues arginine 352 and arginine 393 each coordinate phosphoenolpyruvate.

The protein belongs to the EPSP synthase family. In terms of assembly, monomer.

It localises to the cytoplasm. The catalysed reaction is 3-phosphoshikimate + phosphoenolpyruvate = 5-O-(1-carboxyvinyl)-3-phosphoshikimate + phosphate. It functions in the pathway metabolic intermediate biosynthesis; chorismate biosynthesis; chorismate from D-erythrose 4-phosphate and phosphoenolpyruvate: step 6/7. Catalyzes the transfer of the enolpyruvyl moiety of phosphoenolpyruvate (PEP) to the 5-hydroxyl of shikimate-3-phosphate (S3P) to produce enolpyruvyl shikimate-3-phosphate and inorganic phosphate. The polypeptide is 3-phosphoshikimate 1-carboxyvinyltransferase (Helicobacter hepaticus (strain ATCC 51449 / 3B1)).